The primary structure comprises 595 residues: Methionine--tRNA ligase (595 aa).

Residues 11 to 21 (PYANGPRHIGH) carry the 'HIGH' region motif. Positions 143, 146, 156, and 159 each coordinate Zn(2+). The 'KMSKS' region signature appears at 350 to 354 (KFSSS). Serine 353 provides a ligand contact to ATP.

The protein belongs to the class-I aminoacyl-tRNA synthetase family. MetG type 1 subfamily. Monomer. Requires Zn(2+) as cofactor.

The protein resides in the cytoplasm. It carries out the reaction tRNA(Met) + L-methionine + ATP = L-methionyl-tRNA(Met) + AMP + diphosphate. Functionally, is required not only for elongation of protein synthesis but also for the initiation of all mRNA translation through initiator tRNA(fMet) aminoacylation. The chain is Methionine--tRNA ligase from Nocardioides sp. (strain ATCC BAA-499 / JS614).